The following is a 259-amino-acid chain: Aliphatic sulfonates import ATP-binding protein SsuB 2 (259 aa).

The ABC transporter domain maps to 17–238 (LDILGLWKGF…VRSSQAFTSI (222 aa)). 49–56 (GRSGCGKS) is a binding site for ATP.

The protein belongs to the ABC transporter superfamily. Aliphatic sulfonates importer (TC 3.A.1.17.2) family. The complex is composed of two ATP-binding proteins (SsuB), two transmembrane proteins (SsuC) and a solute-binding protein (SsuA).

Its subcellular location is the cell inner membrane. The enzyme catalyses ATP + H2O + aliphatic sulfonate-[sulfonate-binding protein]Side 1 = ADP + phosphate + aliphatic sulfonateSide 2 + [sulfonate-binding protein]Side 1.. Part of the ABC transporter complex SsuABC involved in aliphatic sulfonates import. Responsible for energy coupling to the transport system. This Agrobacterium fabrum (strain C58 / ATCC 33970) (Agrobacterium tumefaciens (strain C58)) protein is Aliphatic sulfonates import ATP-binding protein SsuB 2.